A 263-amino-acid chain; its full sequence is Indolethylamine N-methyltransferase (263 aa).

The residue at position 13 (lysine 13) is an N6-succinyllysine. S-adenosyl-L-methionine contacts are provided by residues tyrosine 20, tyrosine 25, 63 to 64 (GS), tyrosine 69, aspartate 85, and asparagine 90. The residue at position 96 (lysine 96) is an N6-succinyllysine. Residues 142–143 (DA) and leucine 163 contribute to the S-adenosyl-L-methionine site.

It belongs to the class I-like SAM-binding methyltransferase superfamily. NNMT/PNMT/TEMT family. Monomer. As to expression, highly expressed in lung, also detected in liver and at very low levels in brain.

It localises to the cytoplasm. The enzyme catalyses a tertiary amine + S-adenosyl-L-methionine = a methylated tertiary amine + S-adenosyl-L-homocysteine + H(+). It catalyses the reaction a secondary amine + S-adenosyl-L-methionine = a methylated secondary amine + S-adenosyl-L-homocysteine + H(+). It carries out the reaction a primary amine + S-adenosyl-L-methionine = a methylated primary amine + S-adenosyl-L-homocysteine + H(+). The catalysed reaction is dimethyl sulfide + S-adenosyl-L-methionine = trimethylsulfonium + S-adenosyl-L-homocysteine. Its function is as follows. Catalyzes the N-methylation of tryptamine and structurally related compounds. Functions as a thioether S-methyltransferase and is active with a variety of thioethers and the corresponding selenium and tellurium compounds, including 3-methylthiopropionaldehyde, dimethyl selenide, dimethyl telluride, 2-methylthioethylamine, 2-methylthioethanol, methyl-n-propyl sulfide and diethyl sulfide. Plays an important role in the detoxification of selenium compounds. This chain is Indolethylamine N-methyltransferase (INMT), found in Oryctolagus cuniculus (Rabbit).